Reading from the N-terminus, the 466-residue chain is Uronate isomerase (466 aa).

Belongs to the metallo-dependent hydrolases superfamily. Uronate isomerase family.

The enzyme catalyses D-glucuronate = D-fructuronate. The catalysed reaction is aldehydo-D-galacturonate = keto-D-tagaturonate. It participates in carbohydrate metabolism; pentose and glucuronate interconversion. The chain is Uronate isomerase from Clostridium perfringens (strain 13 / Type A).